The chain runs to 126 residues: NADH-quinone oxidoreductase subunit A (126 aa).

Transmembrane regions (helical) follow at residues 11-31 (IAIQ…SSWL), 64-84 (FLVA…YPWA), and 98-118 (EGFV…IYVI).

This sequence belongs to the complex I subunit 3 family. As to quaternary structure, NDH-1 is composed of 14 different subunits. Subunits NuoA, H, J, K, L, M, N constitute the membrane sector of the complex.

It localises to the cell inner membrane. The enzyme catalyses a quinone + NADH + 5 H(+)(in) = a quinol + NAD(+) + 4 H(+)(out). Functionally, NDH-1 shuttles electrons from NADH, via FMN and iron-sulfur (Fe-S) centers, to quinones in the respiratory chain. The immediate electron acceptor for the enzyme in this species is believed to be a menaquinone. Couples the redox reaction to proton translocation (for every two electrons transferred, four hydrogen ions are translocated across the cytoplasmic membrane), and thus conserves the redox energy in a proton gradient. This chain is NADH-quinone oxidoreductase subunit A, found in Cytophaga hutchinsonii (strain ATCC 33406 / DSM 1761 / CIP 103989 / NBRC 15051 / NCIMB 9469 / D465).